Reading from the N-terminus, the 156-residue chain is Small ribosomal subunit protein uS7 (156 aa).

Belongs to the universal ribosomal protein uS7 family. As to quaternary structure, part of the 30S ribosomal subunit. Contacts proteins S9 and S11.

Functionally, one of the primary rRNA binding proteins, it binds directly to 16S rRNA where it nucleates assembly of the head domain of the 30S subunit. Is located at the subunit interface close to the decoding center, probably blocks exit of the E-site tRNA. This Thiobacillus denitrificans (strain ATCC 25259 / T1) protein is Small ribosomal subunit protein uS7.